The primary structure comprises 79 residues: Hematopoietic cell signal transducer (79 aa).

The N-terminal stretch at 1–18 (MAPPGGILFLLLLPVAAA) is a signal peptide. Over 19–35 (QVTSGSCSGCGPLSLPL) the chain is Extracellular. Residues 36-56 (LAGLVAADAVVSLLIVVGVFV) traverse the membrane as a helical segment. At 57–79 (CGRPRSRPTQEDGKIYINMPGRG) the chain is on the cytoplasmic side. Y72 is subject to Phosphotyrosine. The segment at 72–74 (YIN) is GRB2 binding site. Residues 72–75 (YINM) form a PIK3R1 binding site region.

This sequence belongs to the DAP10 family. As to quaternary structure, homodimer; Disulfide-linked. Heterohexamer composed of four subunits of HCST/DAP10 and two subunits of KLRK1. Interacts (via transmembrane domain) with KLRK1 (via transmembrane domain); the interaction is required for KLRK1 NK cell surface and induces NK cell-mediated cytotoxicity. Interacts with PIK3R1 and GRB2. Interacts with CLEC5A. Forms an CLEC5A/TYROBP/HCST trimolecular complex depending almost solely on TYROBP. Interacts with KLRK1. Interacts with CD300H. Phosphorylated; PIK3R1 and GRB2 associate specifically with tyrosine-phosphorylated HCST. Post-translationally, O-glycosylated. As to expression, expressed predominantly in lymphohematopoietic tissues.

It localises to the membrane. In terms of biological role, transmembrane adapter protein which associates with KLRK1 to form an activation receptor KLRK1-HCST in lymphoid and myeloid cells; this receptor plays a major role in triggering cytotoxicity against target cells expressing cell surface ligands such as MHC class I chain-related MICA and MICB, and UL16-binding proteins (ULBPs); these ligands are up-regulated by stress conditions and pathological state such as viral infection and tumor transformation. Functions as a docking site for PI3-kinase PIK3R1 and GRB2. Interaction of ULBPs with KLRK1-HCST triggers calcium mobilization and activation of the PIK3R1, MAP2K/ERK, and JAK2/STAT5 signaling pathways. Both PIK3R1 and GRB2 are required for full KLRK1-HCST-mediated activation and ultimate killing of target cells. In NK cells, KLRK1-HCST signaling directly induces cytotoxicity and enhances cytokine production initiated via DAP12/TYROBP-associated receptors. In T-cells, it provides primarily costimulation for TCR-induced signals. KLRK1-HCST receptor plays a role in immune surveillance against tumors and is required for cytolysis of tumors cells; indeed, melanoma cells that do not express KLRK1 ligands escape from immune surveillance mediated by NK cells. The sequence is that of Hematopoietic cell signal transducer (HCST) from Sus scrofa (Pig).